The sequence spans 291 residues: MTTLAIDIGGTKLAAALIGADGQIRDRRELPTPASQTPQALRDALSALVSPLQAHAQRVAIASTGIIRDGSLLALNPHNLGGLLHFPLVKTLEQLTNLPTIAINDAQAAAWAEYQALDGDITDMVFITVSTGVGGGVVSGGKLRTGPGGLAGHIGHTLADPHGPVCGCGRTGCVEAIASGRGIATAAQGELAGANAKTIFTRAGQGDEQAQQLIHRSARTLARLIADIKATTDCQCVVVGGSVGLAEGYLALVETYLAQEPAAFHVDLLAAHYRHDAGLLGAALLAQGEKL.

Residues 5–12 and 132–139 contribute to the ATP site; these read AIDIGGTK and GVGGGVVS. Zn(2+) contacts are provided by H156, C166, C168, and C173.

This sequence belongs to the ROK (NagC/XylR) family. NanK subfamily. Homodimer.

The catalysed reaction is an N-acyl-D-mannosamine + ATP = an N-acyl-D-mannosamine 6-phosphate + ADP + H(+). The protein operates within amino-sugar metabolism; N-acetylneuraminate degradation; D-fructose 6-phosphate from N-acetylneuraminate: step 2/5. In terms of biological role, catalyzes the phosphorylation of N-acetylmannosamine (ManNAc) to ManNAc-6-P. In Escherichia coli O6:K15:H31 (strain 536 / UPEC), this protein is N-acetylmannosamine kinase.